The sequence spans 363 residues: UDP-N-acetylenolpyruvoylglucosamine reductase (363 aa).

In terms of domain architecture, FAD-binding PCMH-type spans 27–197; sequence LGGWATRVVT…LSVDFRLARS (171 aa). Arginine 175 is a catalytic residue. Catalysis depends on serine 252, which acts as the Proton donor. Glutamate 355 is a catalytic residue.

Belongs to the MurB family. FAD is required as a cofactor.

It localises to the cytoplasm. The enzyme catalyses UDP-N-acetyl-alpha-D-muramate + NADP(+) = UDP-N-acetyl-3-O-(1-carboxyvinyl)-alpha-D-glucosamine + NADPH + H(+). Its pathway is cell wall biogenesis; peptidoglycan biosynthesis. Cell wall formation. This chain is UDP-N-acetylenolpyruvoylglucosamine reductase, found in Salinispora arenicola (strain CNS-205).